Here is a 41-residue protein sequence, read N- to C-terminus: Minor histocompatibility protein HB-1 (41 aa).

Positions 9 to 17 are loss of recognition by cytotoxic T lymphocyte (CTL); that stretch reads EEKRGSLHV.

In terms of assembly, HB-1 forms a complex with MHC class I HLA-B44. In terms of tissue distribution, expressed in acute lymphoblastic leukemia B-cells and Epstein-Barr virus-transformed B-cells.

Functionally, precursor of the histocomplatibility antigen HB-1. More generally, minor histocomplatibility antigens (mHags) refer to immunogenic peptide which, when complexed with MHC, can generate an immune response after recognition by specific T-cells. The peptides are derived from polymorphic intracellular proteins, which are cleaved by normal pathways of antigen processing. The binding of these peptides to MHC class I or class II molecules and its expression on the cell surface can stimulate T-cell responses and thereby trigger graft rejection or graft-versus-host disease (GVHD) after hematopoietic stem cell transplantation from HLA-identical sibling donor. GVHD is a frequent complication after bone marrow transplantation (BMT), due to mismatch of minor histocomplatibility antigen in HLA-matched sibling marrow transplants. HB-1 is presented on the cell surface by MHC class I HLA-B44. This complex specifically elicits donor-cytotoxic T lymphocyte (CTL) reactivity in B-cell acute lymphoblastic leukemia (B-ALL) after treatment by HLA-identical allogenic bone marrow transplantation (BMT). It induces cell recognition and lysis by CTL. However, HB-1 restricted expression in B-ALL cells and not in normal tissues may allow a specific CTL reactivity against B-ALL without the risk of evoking graft-versus-host disease. In Homo sapiens (Human), this protein is Minor histocompatibility protein HB-1 (HMHB1).